A 409-amino-acid polypeptide reads, in one-letter code: Major capsid protein (409 aa).

The protein belongs to the lambda phage major capsid protein family. In terms of assembly, homomultimer. Interacts with the portal protein. Interacts with the decoration protein.

It is found in the virion. Its subcellular location is the host cytoplasm. Functionally, assembles to form an icosahedric capsid shell with a T=7 symmetry although with a diameter of about 82 nm, which is a larger volume than the usual T=7 capsids. A dramatic reconfiguration of the capsid shell that expands the procaspid from a diameter of 66 nm to a supersized capsid of 82 nm, allows packaging of the large viral DNA genome. The capsid decoration protein binds the expanded capsid and stabilizes it. In Thermus virus P23-45 (Thermus thermophilus phage P23-45), this protein is Major capsid protein.